A 508-amino-acid chain; its full sequence is Bifunctional purine biosynthesis protein PurH (508 aa).

The MGS-like domain occupies 1 to 144; sequence MTRALLSVSD…KNFAGVLPIV (144 aa).

The protein belongs to the PurH family.

It carries out the reaction (6R)-10-formyltetrahydrofolate + 5-amino-1-(5-phospho-beta-D-ribosyl)imidazole-4-carboxamide = 5-formamido-1-(5-phospho-D-ribosyl)imidazole-4-carboxamide + (6S)-5,6,7,8-tetrahydrofolate. The catalysed reaction is IMP + H2O = 5-formamido-1-(5-phospho-D-ribosyl)imidazole-4-carboxamide. It functions in the pathway purine metabolism; IMP biosynthesis via de novo pathway; 5-formamido-1-(5-phospho-D-ribosyl)imidazole-4-carboxamide from 5-amino-1-(5-phospho-D-ribosyl)imidazole-4-carboxamide (10-formyl THF route): step 1/1. The protein operates within purine metabolism; IMP biosynthesis via de novo pathway; IMP from 5-formamido-1-(5-phospho-D-ribosyl)imidazole-4-carboxamide: step 1/1. The sequence is that of Bifunctional purine biosynthesis protein PurH from Leuconostoc citreum (strain KM20).